The chain runs to 298 residues: Fe(II)/2-oxoglutarate-dependent dioxygenase nvfF (298 aa).

The Fe cation site is built by His137, Asp139, and His212.

This sequence belongs to the PhyH family. Homodimer. The cofactor is Fe cation.

It carries out the reaction fumigatonoid C + 2-oxoglutarate + O2 = novofumigatonin + succinate + CO2 + H2O. Its pathway is secondary metabolite biosynthesis; terpenoid biosynthesis. Its function is as follows. Fe(II)/2-oxoglutarate-dependent dioxygenase; part of the gene cluster that mediates the biosynthesis of novofumigatonin, a heavily oxygenated meroterpenoid containing a unique orthoester moiety. The first step of the pathway is the synthesis of 3,5-dimethylorsellinic acid (DMOA) by the polyketide synthase nvfA via condensation of one acetyl-CoA starter unit with 3 malonyl-CoA units and 2 methylations. DMOA is then converted to farnesyl-DMOA by the farnesyltransferase nvfB. Epoxydation by FAD-dependent monooxygenase nvfK, followed by a protonation-initiated cyclization catalyzed by the terpene cyclase nvfL leads to the production of asnavolin H. The short chain dehydrogenase nvfC then as a 3-OH dehydrogenase of asnovolin H to yield chemesin D. There are two branches to synthesize asnovolin A from chemesin D. In one branch, chemesin D undergoes Baeyer-Villiger oxidation by nvfH, methylation by nvfJ, and enoyl reduction by the nvfM D enoylreductase that reduces the double bond between C-5'and C-6', to form respectively asnovolin I, asnovolin K, and asnovolin A. In the other branch, the methylation precedes the Baeyer-Villiger oxidation and the enoyl reduction to yield asnovolin A via the asnovolin J intermediate. Asnovolin A is further converted to fumigatonoid A by the Fe(II)/2-oxoglutarate-dependent dioxygenase nvfI that catalyzes an endoperoxidation reaction. The alpha/beta hydrolase nvfD then acts as an epimerase that converts fumigatonoid A to its C-5' epimer, which then undergoes spontaneous or nvfD-catalyzed lactonization. The following step utilizes the ketoreductase nvfG to produce fumigatonoid B. The dioxygenase nvfE further converts fumigatonoid B into fumigatonoid C. Finally the Fe(II)/2-oxoglutarate-dependent dioxygenase nvfF catalyzes two rounds of oxidation to transform fumigatonoid C into the end product, novofumigatonin A. The chain is Fe(II)/2-oxoglutarate-dependent dioxygenase nvfF from Aspergillus novofumigatus (strain IBT 16806).